The sequence spans 218 residues: MSKNNENIKHQNNDKVNNQVDKKETKNHNKQEFKYKELYEHELKKNKELQNINTLLKDKNQQLEEQISQLNQDFIKQLETKAKQAQQILEQKVNELEARHEAKVNDAVFKIFKFKMEPLLDAINHFTKIVNQNYDDPKIQAFIEGFKMFSQNMIDGLDNLKITKISPQVNDSLNDEIMEVFEVVENTNKPSMHVVEVISDGFKYNDKVIKFAVVKVAK.

Basic and acidic residues-rich tracts occupy residues 1 to 13 (MSKNNENIKHQNN) and 20 to 32 (VDKKETKNHNKQE). The disordered stretch occupies residues 1 to 32 (MSKNNENIKHQNNDKVNNQVDKKETKNHNKQE).

The protein belongs to the GrpE family. In terms of assembly, homodimer.

The protein localises to the cytoplasm. Functionally, participates actively in the response to hyperosmotic and heat shock by preventing the aggregation of stress-denatured proteins, in association with DnaK and GrpE. It is the nucleotide exchange factor for DnaK and may function as a thermosensor. Unfolded proteins bind initially to DnaJ; upon interaction with the DnaJ-bound protein, DnaK hydrolyzes its bound ATP, resulting in the formation of a stable complex. GrpE releases ADP from DnaK; ATP binding to DnaK triggers the release of the substrate protein, thus completing the reaction cycle. Several rounds of ATP-dependent interactions between DnaJ, DnaK and GrpE are required for fully efficient folding. This is Protein GrpE from Ureaplasma parvum serovar 3 (strain ATCC 27815 / 27 / NCTC 11736).